Consider the following 192-residue polypeptide: Ion-translocating oxidoreductase complex subunit A (192 aa).

6 helical membrane passes run 5 to 25 (LLLL…FLGL), 39 to 59 (IGMS…SYLV), 65 to 85 (LPFD…AVVV), 102 to 122 (ALGI…VALL), 134 to 154 (AIYG…FSAM), and 171 to 191 (AIAM…TGLV).

Belongs to the NqrDE/RnfAE family. The complex is composed of six subunits: RnfA, RnfB, RnfC, RnfD, RnfE and RnfG.

Its subcellular location is the cell inner membrane. In terms of biological role, part of a membrane-bound complex that couples electron transfer with translocation of ions across the membrane. In Shewanella oneidensis (strain ATCC 700550 / JCM 31522 / CIP 106686 / LMG 19005 / NCIMB 14063 / MR-1), this protein is Ion-translocating oxidoreductase complex subunit A.